Here is a 77-residue protein sequence, read N- to C-terminus: Conotoxin ArMSGL-0143 (77 aa).

The first 22 residues, 1–22 (MSGLGIMLLTLLLLVFMETSHQ), serve as a signal peptide directing secretion. A propeptide spanning residues 23 to 44 (DAGEKQATQRDAINVRRRRSLT) is cleaved from the precursor. Intrachain disulfides connect Cys51-Cys63, Cys55-Cys71, and Cys62-Cys75. Position 76 is a phenylalanine amide (Phe76).

Belongs to the conotoxin O3 superfamily. In terms of tissue distribution, expressed by the venom duct.

It localises to the secreted. The polypeptide is Conotoxin ArMSGL-0143 (Conus arenatus (Sand-dusted cone)).